Consider the following 268-residue polypeptide: Tryptophan synthase alpha chain (268 aa).

Catalysis depends on proton acceptor residues Glu49 and Asp60.

This sequence belongs to the TrpA family. Tetramer of two alpha and two beta chains.

It catalyses the reaction (1S,2R)-1-C-(indol-3-yl)glycerol 3-phosphate + L-serine = D-glyceraldehyde 3-phosphate + L-tryptophan + H2O. It participates in amino-acid biosynthesis; L-tryptophan biosynthesis; L-tryptophan from chorismate: step 5/5. Its function is as follows. The alpha subunit is responsible for the aldol cleavage of indoleglycerol phosphate to indole and glyceraldehyde 3-phosphate. In Sodalis glossinidius (strain morsitans), this protein is Tryptophan synthase alpha chain.